Here is a 209-residue protein sequence, read N- to C-terminus: Dual specificity phosphatase 29 (209 aa).

The Tyrosine-protein phosphatase domain occupies 44–193 (NHVNEVWPNL…LRELDIQLAL (150 aa)). 137-144 (NCAMGRSR) is a substrate binding site. Cysteine 138 (phosphocysteine intermediate) is an active-site residue.

It belongs to the protein-tyrosine phosphatase family. Non-receptor class dual specificity subfamily.

It localises to the cytoplasm. Its subcellular location is the nucleus. The catalysed reaction is O-phospho-L-tyrosyl-[protein] + H2O = L-tyrosyl-[protein] + phosphate. The enzyme catalyses O-phospho-L-seryl-[protein] + H2O = L-seryl-[protein] + phosphate. It carries out the reaction O-phospho-L-threonyl-[protein] + H2O = L-threonyl-[protein] + phosphate. Its function is as follows. Dual specificity phosphatase able to dephosphorylate phosphotyrosine, phosphoserine and phosphothreonine residues within the same substrate, with a preference for phosphotyrosine as a substrate. Involved in the modulation of AMPK and MAPK1/2 signaling pathways. In Xenopus tropicalis (Western clawed frog), this protein is Dual specificity phosphatase 29 (dusp29).